A 285-amino-acid polypeptide reads, in one-letter code: MHSPHADKGNALDTVAHKTLTRGWQAELDLRFTRAAHKTVLTSARHVGPLTVQRPFYPEDDVCHLYLLHPPGGIVGGDELTISATLATDSHALITQPGSGKFYRSRGPQAQLRQDFYLAPQATLEWLPQDTILFPGANANIQSVFHLAQESRLLAWDLLCLGRPVMQETFSHGTLRNRLEVWRDGTPLLIERLHLEGGSLHTVARHPWSGTLLCYPATEKMLDGVREQIAPLGDYAGATLIDSLLALRFLGHDNLLIQRVMRAVWQSLRPQLTQKPPLLPRIWQT.

Belongs to the UreD family. As to quaternary structure, ureD, UreF and UreG form a complex that acts as a GTP-hydrolysis-dependent molecular chaperone, activating the urease apoprotein by helping to assemble the nickel containing metallocenter of UreC. The UreE protein probably delivers the nickel.

It is found in the cytoplasm. In terms of biological role, required for maturation of urease via the functional incorporation of the urease nickel metallocenter. This chain is Urease accessory protein UreD, found in Citrobacter koseri (strain ATCC BAA-895 / CDC 4225-83 / SGSC4696).